Here is a 466-residue protein sequence, read N- to C-terminus: Fumarate hydratase class II (466 aa).

Residues 100–102 (SGT), arginine 128, 131–134 (HPND), 141–143 (STN), and threonine 189 each bind substrate. Residue histidine 190 is the Proton donor/acceptor of the active site. Serine 320 is an active-site residue. Substrate contacts are provided by residues serine 321 and 326-328 (KVN).

The protein belongs to the class-II fumarase/aspartase family. Fumarase subfamily. As to quaternary structure, homotetramer.

The protein resides in the cytoplasm. The enzyme catalyses (S)-malate = fumarate + H2O. Its pathway is carbohydrate metabolism; tricarboxylic acid cycle; (S)-malate from fumarate: step 1/1. Its function is as follows. Involved in the TCA cycle. Catalyzes the stereospecific interconversion of fumarate to L-malate. The chain is Fumarate hydratase class II from Prochlorococcus marinus (strain MIT 9313).